The following is a 201-amino-acid chain: Recombination protein RecR (201 aa).

A C4-type zinc finger spans residues 60–75; sequence CKSCGNIDTRNPCTVC. The 96-residue stretch at 83–178 folds into the Toprim domain; that stretch reads SIIVVVADVA…KVTRLAHGVP (96 aa).

The protein belongs to the RecR family.

Functionally, may play a role in DNA repair. It seems to be involved in an RecBC-independent recombinational process of DNA repair. It may act with RecF and RecO. This chain is Recombination protein RecR, found in Rhodopseudomonas palustris (strain BisB5).